Consider the following 225-residue polypeptide: Heptaprenylglyceryl phosphate synthase (225 aa).

K6 lines the sn-glycerol 1-phosphate pocket. D8 and T34 together coordinate Mg(2+). Sn-glycerol 1-phosphate-binding positions include 153–158, G183, and 203–204; these read YVEYSG and GN.

This sequence belongs to the GGGP/HepGP synthase family. Group I subfamily. As to quaternary structure, homodimer. It depends on Mg(2+) as a cofactor.

It catalyses the reaction sn-glycerol 1-phosphate + all-trans-heptaprenyl diphosphate = 3-heptaprenyl-sn-glycero-1-phosphate + diphosphate. It participates in membrane lipid metabolism; glycerophospholipid metabolism. Functionally, prenyltransferase that catalyzes in vivo the transfer of the heptaprenyl moiety of heptaprenyl pyrophosphate (HepPP; 35 carbon atoms) to the C3 hydroxyl of sn-glycerol-1-phosphate (G1P), producing heptaprenylglyceryl phosphate (HepGP). This reaction is an ether-bond-formation step in the biosynthesis of archaea-type G1P-based membrane lipids found in Bacillales. This Listeria innocua serovar 6a (strain ATCC BAA-680 / CLIP 11262) protein is Heptaprenylglyceryl phosphate synthase.